We begin with the raw amino-acid sequence, 502 residues long: UPF0371 protein CLH_2534 (502 aa).

This sequence belongs to the UPF0371 family.

This Clostridium botulinum (strain Alaska E43 / Type E3) protein is UPF0371 protein CLH_2534.